A 276-amino-acid polypeptide reads, in one-letter code: Streptothricin hydrolase (276 aa).

Residue Cys176 is the Nucleophile of the active site. The interval 250 to 276 (PEAPAAAAAPAAGTGLSPAGPPPAPAR) is disordered. A compositionally biased stretch (low complexity) spans 252 to 267 (APAAAAAPAAGTGLSP).

This sequence belongs to the isochorismatase family. In terms of assembly, homodimer. The cofactor is Does not require a metal cofactor..

It catalyses the reaction streptothricin F + H2O = streptothricin F acid. Its function is as follows. Catalyzes the hydrolysis of the amide bond of streptolidine lactam, thereby conferring streptothricin (ST) resistance. Can hydrolyze streptothricin-F and streptothricin-D. However, this strain is believed to be a ST nonproducer, which raises the possibility that its true role may not be its involvement in self-resistance to STs. May catalyze the hydrolysis of naturally occurring cyclic amide compounds that are structurally related to STs. This Streptomyces noursei (Streptomyces albulus) protein is Streptothricin hydrolase (sttH).